The chain runs to 98 residues: Integration host factor subunit alpha (98 aa).

Positions 49 to 71 are disordered; that stretch reads FGNFDLRDKNQRPGRNPKTGEDI.

This sequence belongs to the bacterial histone-like protein family. As to quaternary structure, heterodimer of an alpha and a beta chain.

This protein is one of the two subunits of integration host factor, a specific DNA-binding protein that functions in genetic recombination as well as in transcriptional and translational control. The protein is Integration host factor subunit alpha of Shewanella sp. (strain MR-4).